Consider the following 369-residue polypeptide: Maltose/maltodextrin import ATP-binding protein MalK (369 aa).

An ABC transporter domain is found at 4–234 (VTLRNVCKAY…PQNRFVAGFI (231 aa)). 36–43 (GPSGCGKS) contributes to the ATP binding site.

It belongs to the ABC transporter superfamily. Maltooligosaccharide importer (TC 3.A.1.1.1) family. The complex is composed of two ATP-binding proteins (MalK), two transmembrane proteins (MalG and MalK) and a solute-binding protein (MalE).

The protein localises to the cell inner membrane. It catalyses the reaction D-maltose(out) + ATP + H2O = D-maltose(in) + ADP + phosphate + H(+). Its function is as follows. Part of the ABC transporter complex MalEFGK involved in maltose/maltodextrin import. Responsible for energy coupling to the transport system. In Photobacterium profundum (strain SS9), this protein is Maltose/maltodextrin import ATP-binding protein MalK.